Consider the following 304-residue polypeptide: tRNA pseudouridine synthase B (304 aa).

Asp38 functions as the Nucleophile in the catalytic mechanism.

This sequence belongs to the pseudouridine synthase TruB family. Type 1 subfamily.

It catalyses the reaction uridine(55) in tRNA = pseudouridine(55) in tRNA. Responsible for synthesis of pseudouridine from uracil-55 in the psi GC loop of transfer RNAs. This is tRNA pseudouridine synthase B from Listeria welshimeri serovar 6b (strain ATCC 35897 / DSM 20650 / CCUG 15529 / CIP 8149 / NCTC 11857 / SLCC 5334 / V8).